The sequence spans 184 residues: Ribosome-recycling factor (184 aa).

It belongs to the RRF family.

The protein resides in the cytoplasm. Functionally, responsible for the release of ribosomes from messenger RNA at the termination of protein biosynthesis. May increase the efficiency of translation by recycling ribosomes from one round of translation to another. The chain is Ribosome-recycling factor from Oleidesulfovibrio alaskensis (strain ATCC BAA-1058 / DSM 17464 / G20) (Desulfovibrio alaskensis).